The chain runs to 267 residues: Energy-coupling factor transporter transmembrane protein EcfT (267 aa).

Transmembrane regions (helical) follow at residues 30-50 (FWYVVIIFFAKGPLTYLLLVA), 67-87 (WAGLKPLLWVIGLTIAIQVLF), 110-130 (ALVILARFILIVLASTVLTAT), 152-172 (VPVNQIAMMISIALRFIPTIM), and 247-267 (SIALAVVVIVSVLFFVARILL).

This sequence belongs to the energy-coupling factor EcfT family. In terms of assembly, forms a stable energy-coupling factor (ECF) transporter complex composed of 2 membrane-embedded substrate-binding proteins (S component), 2 ATP-binding proteins (A component) and 2 transmembrane proteins (T component). May be able to interact with more than 1 S component at a time.

It is found in the cell membrane. Transmembrane (T) component of an energy-coupling factor (ECF) ABC-transporter complex. Unlike classic ABC transporters this ECF transporter provides the energy necessary to transport a number of different substrates. The sequence is that of Energy-coupling factor transporter transmembrane protein EcfT from Limosilactobacillus fermentum (strain CECT 5716 / Lc40) (Lactobacillus fermentum).